Here is a 256-residue protein sequence, read N- to C-terminus: Small ribosomal subunit protein eS1A (256 aa).

Ala2 carries the N-acetylalanine; partial modification.

It belongs to the eukaryotic ribosomal protein eS1 family. Component of the small ribosomal subunit. Mature ribosomes consist of a small (40S) and a large (60S) subunit. The 40S subunit contains about 33 different proteins and 1 molecule of RNA (18S). The 60S subunit contains about 49 different proteins and 3 molecules of RNA (25S, 5.8S and 5S).

The protein localises to the cytoplasm. The protein is Small ribosomal subunit protein eS1A of Clavispora lusitaniae (strain ATCC 42720) (Yeast).